The sequence spans 333 residues: tRNA dimethylallyltransferase (333 aa).

23–30 (GPTGAGKT) serves as a coordination point for ATP. 25-30 (TGAGKT) contacts substrate. Interaction with substrate tRNA regions lie at residues 53-56 (DSAL) and 177-181 (QRVQR).

Belongs to the IPP transferase family. Monomer. It depends on Mg(2+) as a cofactor.

It catalyses the reaction adenosine(37) in tRNA + dimethylallyl diphosphate = N(6)-dimethylallyladenosine(37) in tRNA + diphosphate. Functionally, catalyzes the transfer of a dimethylallyl group onto the adenine at position 37 in tRNAs that read codons beginning with uridine, leading to the formation of N6-(dimethylallyl)adenosine (i(6)A). The chain is tRNA dimethylallyltransferase from Polynucleobacter asymbioticus (strain DSM 18221 / CIP 109841 / QLW-P1DMWA-1) (Polynucleobacter necessarius subsp. asymbioticus).